A 292-amino-acid chain; its full sequence is GTP cyclohydrolase FolE2 (292 aa).

This sequence belongs to the GTP cyclohydrolase IV family.

It catalyses the reaction GTP + H2O = 7,8-dihydroneopterin 3'-triphosphate + formate + H(+). The protein operates within cofactor biosynthesis; 7,8-dihydroneopterin triphosphate biosynthesis; 7,8-dihydroneopterin triphosphate from GTP: step 1/1. Functionally, converts GTP to 7,8-dihydroneopterin triphosphate. In Staphylococcus aureus (strain Mu50 / ATCC 700699), this protein is GTP cyclohydrolase FolE2.